The primary structure comprises 109 residues: Phosphoribosyl-ATP pyrophosphatase (109 aa).

It belongs to the PRA-PH family.

The protein resides in the cytoplasm. It carries out the reaction 1-(5-phospho-beta-D-ribosyl)-ATP + H2O = 1-(5-phospho-beta-D-ribosyl)-5'-AMP + diphosphate + H(+). It participates in amino-acid biosynthesis; L-histidine biosynthesis; L-histidine from 5-phospho-alpha-D-ribose 1-diphosphate: step 2/9. The sequence is that of Phosphoribosyl-ATP pyrophosphatase from Sphingopyxis alaskensis (strain DSM 13593 / LMG 18877 / RB2256) (Sphingomonas alaskensis).